Consider the following 955-residue polypeptide: Structure-specific endonuclease subunit SLX4 (955 aa).

Disordered stretches follow at residues 75-173 (QAEQ…RTTS), 189-231 (PVTT…TVSR), 352-376 (GPSN…KKPR), 539-608 (EMQK…PTKI), 621-648 (PIVA…PPPR), 705-784 (AAGQ…ASPD), and 819-846 (LDSD…EKDS). Basic residues predominate over residues 123–137 (RKARKTANGVTKKKR). Residues 150-159 (NEITTPTKNQ) are compositionally biased toward polar residues. Low complexity predominate over residues 189–198 (PVTTSTTDLT). Residues 209-225 (TKSRVRKTSSAASRKKK) show a composition bias toward basic residues. The segment covering 352–362 (GPSNDSKIPNQ) has biased composition (polar residues). Positions 539 to 551 (EMQKSPSRSEPKG) are enriched in basic and acidic residues. Polar residues predominate over residues 579–601 (SANSAEHTLKTQASKSTHFASTT). 2 stretches are compositionally biased toward low complexity: residues 705–720 (AAGQ…RTSA) and 727–737 (KTSTAAAAAKS). Composition is skewed to basic residues over residues 738 to 748 (PTKRPVGRPRK) and 767 to 776 (KRPRGRPKKN). Low complexity predominate over residues 828-841 (SPSPSLSPEPVFSS).

Belongs to the SLX4 family. Forms a heterodimer with SLX1. In terms of processing, phosphorylated in response to DNA damage.

The protein resides in the nucleus. Regulatory subunit of the SLX1-SLX4 structure-specific endonuclease that resolves DNA secondary structures generated during DNA repair and recombination. Has endonuclease activity towards branched DNA substrates, introducing single-strand cuts in duplex DNA close to junctions with ss-DNA. The sequence is that of Structure-specific endonuclease subunit SLX4 from Pyricularia oryzae (strain 70-15 / ATCC MYA-4617 / FGSC 8958) (Rice blast fungus).